We begin with the raw amino-acid sequence, 829 residues long: Leucine--tRNA ligase (829 aa).

The short motif at 42-52 (PYPSGRIHMGH) is the 'HIGH' region element. A 'KMSKS' region motif is present at residues 584–588 (KMSKS). Lys587 is an ATP binding site.

This sequence belongs to the class-I aminoacyl-tRNA synthetase family.

It is found in the cytoplasm. The enzyme catalyses tRNA(Leu) + L-leucine + ATP = L-leucyl-tRNA(Leu) + AMP + diphosphate. This Syntrophobacter fumaroxidans (strain DSM 10017 / MPOB) protein is Leucine--tRNA ligase.